Consider the following 37-residue polypeptide: Antifungal protein 4 (37 aa).

The protein resides in the secreted. Functionally, possesses antifungal activity against P.infestans but not F.graminearum. The sequence is that of Antifungal protein 4 from Malva parviflora (Little mallow).